The primary structure comprises 442 residues: D-serine dehydratase (442 aa).

Residue Lys118 is modified to N6-(pyridoxal phosphate)lysine.

This sequence belongs to the serine/threonine dehydratase family. DsdA subfamily. In terms of assembly, monomer. Pyridoxal 5'-phosphate serves as cofactor.

It catalyses the reaction D-serine = pyruvate + NH4(+). This is D-serine dehydratase from Escherichia coli O139:H28 (strain E24377A / ETEC).